A 71-amino-acid chain; its full sequence is UPF0346 protein SPT_1257 (71 aa).

The protein belongs to the UPF0346 family.

In Streptococcus pneumoniae (strain Taiwan19F-14), this protein is UPF0346 protein SPT_1257.